Here is a 159-residue protein sequence, read N- to C-terminus: UPF0260 protein Avi_1324 (159 aa).

Belongs to the UPF0260 family.

The protein is UPF0260 protein Avi_1324 of Allorhizobium ampelinum (strain ATCC BAA-846 / DSM 112012 / S4) (Agrobacterium vitis (strain S4)).